The chain runs to 366 residues: Sec-independent protein translocase protein TatC (366 aa).

A run of 7 helical transmembrane segments spans residues 42–62 (VLAV…LFTM), 70–90 (HMPA…FIPL), 97–117 (AVFI…APGL), 134–154 (ILFY…VFGF), 179–199 (LFFA…LVIV), 207–227 (LAGF…ILTP), and 230–250 (VLSQ…GLFV). Residues 266 to 279 (EAEESGAADDESDE) are compositionally biased toward acidic residues. The segment at 266 to 366 (EAEESGAADD…PSPKKPDSPV (101 aa)) is disordered. Basic and acidic residues-rich tracts occupy residues 281–290 (VSARHAEYEA) and 301–318 (DMDK…RLES). Over residues 319–333 (DSSASDDGPESNTAG) the composition is skewed to polar residues.

It belongs to the TatC family. The Tat system comprises two distinct complexes: a TatABC complex, containing multiple copies of TatA, TatB and TatC subunits, and a separate TatA complex, containing only TatA subunits. Substrates initially bind to the TatABC complex, which probably triggers association of the separate TatA complex to form the active translocon.

The protein localises to the cell inner membrane. In terms of biological role, part of the twin-arginine translocation (Tat) system that transports large folded proteins containing a characteristic twin-arginine motif in their signal peptide across membranes. Together with TatB, TatC is part of a receptor directly interacting with Tat signal peptides. The chain is Sec-independent protein translocase protein TatC from Halothiobacillus neapolitanus (strain ATCC 23641 / c2) (Thiobacillus neapolitanus).